A 319-amino-acid polypeptide reads, in one-letter code: rRNA adenine N-6-methyltransferase (319 aa).

A disordered region spans residues 1-59 (MARAPRSPHPARSRETSRAHPPYGTRADRAPGRGRDRDRSPDSPGNTSSRDGGRSPDRA). Residues 26 to 41 (RADRAPGRGRDRDRSP) are compositionally biased toward basic and acidic residues. Residues Asn66, Leu68, Gly93, Glu114, Asp141, and Asn157 each contribute to the S-adenosyl-L-methionine site.

The protein belongs to the class I-like SAM-binding methyltransferase superfamily. rRNA adenine N(6)-methyltransferase family.

It carries out the reaction adenosine(2085) in 23S rRNA + 2 S-adenosyl-L-methionine = N(6)-dimethyladenosine(2085) in 23S rRNA + 2 S-adenosyl-L-homocysteine + 2 H(+). Its function is as follows. This protein produces a dimethylation of the adenine residue at position 2085 in 23S rRNA, resulting in reduced affinity between ribosomes and macrolide-lincosamide-streptogramin B antibiotics. This is rRNA adenine N-6-methyltransferase (ermSF) from Streptomyces fradiae (Streptomyces roseoflavus).